Here is a 306-residue protein sequence, read N- to C-terminus: Acetyl-coenzyme A carboxylase carboxyl transferase subunit beta (306 aa).

The 270-residue stretch at leucine 27–proline 296 folds into the CoA carboxyltransferase N-terminal domain. Residues cysteine 31, cysteine 34, cysteine 50, and cysteine 53 each coordinate Zn(2+). A C4-type zinc finger spans residues cysteine 31–cysteine 53.

It belongs to the AccD/PCCB family. In terms of assembly, acetyl-CoA carboxylase is a heterohexamer composed of biotin carboxyl carrier protein (AccB), biotin carboxylase (AccC) and two subunits each of ACCase subunit alpha (AccA) and ACCase subunit beta (AccD). The cofactor is Zn(2+).

It localises to the cytoplasm. It carries out the reaction N(6)-carboxybiotinyl-L-lysyl-[protein] + acetyl-CoA = N(6)-biotinyl-L-lysyl-[protein] + malonyl-CoA. Its pathway is lipid metabolism; malonyl-CoA biosynthesis; malonyl-CoA from acetyl-CoA: step 1/1. Functionally, component of the acetyl coenzyme A carboxylase (ACC) complex. Biotin carboxylase (BC) catalyzes the carboxylation of biotin on its carrier protein (BCCP) and then the CO(2) group is transferred by the transcarboxylase to acetyl-CoA to form malonyl-CoA. This chain is Acetyl-coenzyme A carboxylase carboxyl transferase subunit beta, found in Pseudomonas savastanoi pv. phaseolicola (strain 1448A / Race 6) (Pseudomonas syringae pv. phaseolicola (strain 1448A / Race 6)).